A 119-amino-acid polypeptide reads, in one-letter code: UPF0145 protein Bcep18194_B0595 (119 aa).

It belongs to the UPF0145 family.

This is UPF0145 protein Bcep18194_B0595 from Burkholderia lata (strain ATCC 17760 / DSM 23089 / LMG 22485 / NCIMB 9086 / R18194 / 383).